Reading from the N-terminus, the 21-residue chain is Putative pancreatic polypeptide 2 (21 aa).

It belongs to the NPY family.

This chain is Putative pancreatic polypeptide 2 (PPY2P), found in Homo sapiens (Human).